The chain runs to 90 residues: Protein S100-A6 (90 aa).

2 EF-hand domains span residues 12 to 47 and 48 to 83; these read LVAI…IGAK and LQDA…LAMI. Residues Thr-28 and Glu-33 each coordinate Ca(2+). Position 40 is an N6-acetyllysine (Lys-40). Lys-47 carries the post-translational modification N6-acetyllysine; alternate. Lys-47 bears the N6-succinyllysine; alternate mark. Ca(2+)-binding residues include Asp-61, Asn-63, Asp-65, and Glu-72.

This sequence belongs to the S-100 family. In terms of assembly, homodimer; head to tail assembly of 2 subunits. Interacts with CACYBP in a calcium-dependent manner. Interacts with ANXA2 and ANXA11 (via N-terminus). Interacts with SUGT1. Interacts with TP53; has higher affinity for TP53 that is phosphorylated on its N-terminal domain, and lower affinity for TP53 that is phosphorylated on its C-terminal domain. Interacts with tropomyosin. Interacts with FKBP4. Interacts with PPP5C (via TPR repeats); the interaction is calcium-dependent and modulates PPP5C activity. Interacts with TPPP; this interaction inhibits TPPP dimerization.

It localises to the nucleus envelope. The protein localises to the cytoplasm. Its subcellular location is the cell membrane. Functionally, may function as calcium sensor and modulator, contributing to cellular calcium signaling. May function by interacting with other proteins, such as TPR-containing proteins, and indirectly play a role in many physiological processes such as the reorganization of the actin cytoskeleton and in cell motility. Binds 2 calcium ions. Calcium binding is cooperative. This Sus scrofa (Pig) protein is Protein S100-A6 (S100A6).